We begin with the raw amino-acid sequence, 345 residues long: MPITPQQALQRTIEHREIFHDEMVDLMRQIMRGEVSDAMVSAILTGLRVKKETIGEIAGAATVMREFSRRVEVTDRCHMVDIVGTGGDGSHTFNISTCAMFVAAAGGAKVAKHGNRSVSSKSGSADALEALGAVIELQPEQVAASLAQTGIGFMYAPVHHPAMKVVAPVRREMGVRTIFNILGPLTNPACSPNILMGVFHPDLVGIQARVLQELGAERALVVWGRDGMDELSLGAGTLVGELRDGQVHEYEVHPEDFGIAMSASRNLKVADAAESRAMLLQVLDNVPGPALDIVALNAGAALYVAGVADSIADGIVRARQVLADGSARACLDAYVAFTQQATAQG.

Residues Gly84, 87 to 88 (GD), Thr92, 94 to 97 (NIST), 112 to 120 (KHGNRSVSS), and Ser124 each bind 5-phospho-alpha-D-ribose 1-diphosphate. Gly84 is an anthranilate binding site. Ser96 contributes to the Mg(2+) binding site. Asn115 is an anthranilate binding site. Residue Arg170 participates in anthranilate binding. Asp229 and Glu230 together coordinate Mg(2+).

The protein belongs to the anthranilate phosphoribosyltransferase family. In terms of assembly, homodimer. The cofactor is Mg(2+).

The catalysed reaction is N-(5-phospho-beta-D-ribosyl)anthranilate + diphosphate = 5-phospho-alpha-D-ribose 1-diphosphate + anthranilate. It participates in amino-acid biosynthesis; L-tryptophan biosynthesis; L-tryptophan from chorismate: step 2/5. In terms of biological role, catalyzes the transfer of the phosphoribosyl group of 5-phosphorylribose-1-pyrophosphate (PRPP) to anthranilate to yield N-(5'-phosphoribosyl)-anthranilate (PRA). The chain is Anthranilate phosphoribosyltransferase from Xanthomonas campestris pv. campestris (strain B100).